The sequence spans 167 residues: Endoribonuclease YbeY (167 aa).

Zn(2+) contacts are provided by His-132, His-136, and His-142.

Belongs to the endoribonuclease YbeY family. Zn(2+) serves as cofactor.

It localises to the cytoplasm. Its function is as follows. Single strand-specific metallo-endoribonuclease involved in late-stage 70S ribosome quality control and in maturation of the 3' terminus of the 16S rRNA. The sequence is that of Endoribonuclease YbeY from Clostridium beijerinckii (strain ATCC 51743 / NCIMB 8052) (Clostridium acetobutylicum).